A 246-amino-acid polypeptide reads, in one-letter code: MGTDGLDDKQARPPRRARRSLRWVLAAPLLFAAASVLQVLALRIIDPPISTVMVGRYLEAWGEGEAGFSLHHQWRDLDEIAPSLPISVVAAEDQQFPSHHGFDLQAIEKARDYNARGGRVRGASTISQQVAKNVFLWQGRSWVRKGLEAWYTLLIELFWPKQRILEMYVNVAEFGDGIYGAQAAARQFWGKDASRLTPTESARLAAVLPSPRRYDARRPGAYVQRRTAWIQRQARQLGGPGYLQAP.

The chain crosses the membrane as a helical span at residues 20–42 (SLRWVLAAPLLFAAASVLQVLAL).

The protein belongs to the glycosyltransferase 51 family.

Its subcellular location is the cell inner membrane. The catalysed reaction is [GlcNAc-(1-&gt;4)-Mur2Ac(oyl-L-Ala-gamma-D-Glu-L-Lys-D-Ala-D-Ala)](n)-di-trans,octa-cis-undecaprenyl diphosphate + beta-D-GlcNAc-(1-&gt;4)-Mur2Ac(oyl-L-Ala-gamma-D-Glu-L-Lys-D-Ala-D-Ala)-di-trans,octa-cis-undecaprenyl diphosphate = [GlcNAc-(1-&gt;4)-Mur2Ac(oyl-L-Ala-gamma-D-Glu-L-Lys-D-Ala-D-Ala)](n+1)-di-trans,octa-cis-undecaprenyl diphosphate + di-trans,octa-cis-undecaprenyl diphosphate + H(+). It functions in the pathway cell wall biogenesis; peptidoglycan biosynthesis. Its function is as follows. Peptidoglycan polymerase that catalyzes glycan chain elongation from lipid-linked precursors. The polypeptide is Biosynthetic peptidoglycan transglycosylase (Xanthomonas campestris pv. campestris (strain 8004)).